A 240-amino-acid polypeptide reads, in one-letter code: Uridylate kinase (240 aa).

Position 12 to 15 (12 to 15) interacts with ATP; that stretch reads KLSG. Residues 20–25 are involved in allosteric activation by GTP; the sequence is GEQGNG. UMP is bound at residue glycine 54. 2 residues coordinate ATP: glycine 55 and arginine 59. UMP-binding positions include aspartate 74 and 135–142; that span reads TGNPYFST. The ATP site is built by asparagine 163, tyrosine 169, and aspartate 172.

It belongs to the UMP kinase family. Homohexamer. Interacts with BrxC.

The protein resides in the cytoplasm. The enzyme catalyses UMP + ATP = UDP + ADP. It functions in the pathway pyrimidine metabolism; CTP biosynthesis via de novo pathway; UDP from UMP (UMPK route): step 1/1. With respect to regulation, allosterically activated by GTP. Can also be activated by dGTP and 3'-anthraniloyl-2'-deoxyguanosine-5'-triphosphate (Ant-dGTP). Inhibited by UTP, 5-bromo-UTP and 5-iodo-UTP. Catalyzes the reversible phosphorylation of UMP to UDP, with ATP or dATP as the most efficient phosphate donors. Is also able to phosphorylate 5-fluoro-UMP and 6-aza-UMP. This Bacillus subtilis (strain 168) protein is Uridylate kinase (pyrH).